Consider the following 222-residue polypeptide: Glycerol-3-phosphate acyltransferase (222 aa).

6 helical membrane passes run 4–24 (ALLL…IPTG), 56–76 (PAAI…VALV), 87–107 (ALPA…VVLG), 130–150 (FMLN…VIFF), 153–173 (IVSL…LALQ), and 174–191 (LPPP…YVIV).

The protein belongs to the PlsY family. In terms of assembly, probably interacts with PlsX.

The protein localises to the cell inner membrane. It catalyses the reaction an acyl phosphate + sn-glycerol 3-phosphate = a 1-acyl-sn-glycero-3-phosphate + phosphate. It participates in lipid metabolism; phospholipid metabolism. Functionally, catalyzes the transfer of an acyl group from acyl-phosphate (acyl-PO(4)) to glycerol-3-phosphate (G3P) to form lysophosphatidic acid (LPA). This enzyme utilizes acyl-phosphate as fatty acyl donor, but not acyl-CoA or acyl-ACP. The sequence is that of Glycerol-3-phosphate acyltransferase from Synechocystis sp. (strain ATCC 27184 / PCC 6803 / Kazusa).